The following is a 178-amino-acid chain: Disulfide bond formation protein B (178 aa).

The Cytoplasmic portion of the chain corresponds to 1–14; it reads MLSFFKTLSMGRSG. Residues 15–31 traverse the membrane as a helical segment; that stretch reads WLLLAFSALVLELVALY. At 32 to 49 the chain is on the periplasmic side; the sequence is FQYGMQLQPCVMCVYERV. Cys41 and Cys44 are disulfide-bonded. Residues 50 to 65 traverse the membrane as a helical segment; it reads ALGGILFAGIIGAIAP. The Cytoplasmic portion of the chain corresponds to 66 to 72; that stretch reads SSWFFRF. A helical transmembrane segment spans residues 73–90; sequence LGIIIGLGASVKGFLLAL. At 91–145 the chain is on the periplasmic side; that stretch reads KHVDYQLNPAPWNQCAYLPEFPQTLPLDQWFPYLFKPIGSCSDIQWSFLGFSMAQ. Cys105 and Cys131 form a disulfide bridge. Residues 146–164 form a helical membrane-spanning segment; it reads WILVMFAFYSILLAIILIS. Over 165 to 178 the chain is Cytoplasmic; the sequence is QVKAGKPKHREIFR.

The protein belongs to the DsbB family.

The protein resides in the cell inner membrane. Required for disulfide bond formation in some periplasmic proteins. Acts by oxidizing the DsbA protein. The protein is Disulfide bond formation protein B of Mannheimia succiniciproducens (strain KCTC 0769BP / MBEL55E).